The chain runs to 435 residues: MTDLTPREIVSELDRFIIGQKDAKRAVAVALRNRWRRKQLADDLRDEVYPKNILMIGPTGVGKTEISRRLAKLARAPFIKVEATKFTEVGYVGRDVEQIIRDLADAAIVQTRDYMRDEVRARAHKAAEDRVITAIAGEDAREGTREMFRKKLKSGELDDTVIELEVADGANPMPMFEIPGQPGGNMGMMNLGDLFGKAFAGRTTRKKLRVADSYEILIGEEADKLLDDELVNKTALEAVEQNGIVFLDEIDKVCARSDARGADVSREGVQRDLLPLIEGTTVSTKYGPIKTDHILFIASGAFHIAKPSDLLPELQGRLPIRVELRALTEEDFVRILTETDNALTLQYTALMGTENVAVTFTPDGIAALAHIAAEVNQSVENIGARRLYTVMERVFEELSFTAPDRSGEAVTVDAGFVDTNLGELTRSTDLSRYVL.

Residues Ile18, 60-65, Asp248, Glu313, and Arg385 contribute to the ATP site; that span reads GVGKTE.

The protein belongs to the ClpX chaperone family. HslU subfamily. In terms of assembly, a double ring-shaped homohexamer of HslV is capped on each side by a ring-shaped HslU homohexamer. The assembly of the HslU/HslV complex is dependent on binding of ATP.

Its subcellular location is the cytoplasm. Its function is as follows. ATPase subunit of a proteasome-like degradation complex; this subunit has chaperone activity. The binding of ATP and its subsequent hydrolysis by HslU are essential for unfolding of protein substrates subsequently hydrolyzed by HslV. HslU recognizes the N-terminal part of its protein substrates and unfolds these before they are guided to HslV for hydrolysis. The sequence is that of ATP-dependent protease ATPase subunit HslU from Ruegeria pomeroyi (strain ATCC 700808 / DSM 15171 / DSS-3) (Silicibacter pomeroyi).